A 390-amino-acid polypeptide reads, in one-letter code: Succinyl-diaminopimelate desuccinylase (390 aa).

His75 is a Zn(2+) binding site. Asp77 is a catalytic residue. Residue Asp108 participates in Zn(2+) binding. Glu141 functions as the Proton acceptor in the catalytic mechanism. Residues Glu142, Glu170, and His359 each coordinate Zn(2+).

The protein belongs to the peptidase M20A family. DapE subfamily. As to quaternary structure, homodimer. Requires Zn(2+) as cofactor. The cofactor is Co(2+).

The catalysed reaction is N-succinyl-(2S,6S)-2,6-diaminopimelate + H2O = (2S,6S)-2,6-diaminopimelate + succinate. Its pathway is amino-acid biosynthesis; L-lysine biosynthesis via DAP pathway; LL-2,6-diaminopimelate from (S)-tetrahydrodipicolinate (succinylase route): step 3/3. Catalyzes the hydrolysis of N-succinyl-L,L-diaminopimelic acid (SDAP), forming succinate and LL-2,6-diaminopimelate (DAP), an intermediate involved in the bacterial biosynthesis of lysine and meso-diaminopimelic acid, an essential component of bacterial cell walls. The protein is Succinyl-diaminopimelate desuccinylase of Maricaulis maris (strain MCS10) (Caulobacter maris).